The primary structure comprises 734 residues: 1,4-alpha-glucan branching enzyme GlgB (734 aa).

D413 acts as the Nucleophile in catalysis. E466 functions as the Proton donor in the catalytic mechanism.

It belongs to the glycosyl hydrolase 13 family. GlgB subfamily. Monomer.

The catalysed reaction is Transfers a segment of a (1-&gt;4)-alpha-D-glucan chain to a primary hydroxy group in a similar glucan chain.. It functions in the pathway glycan biosynthesis; glycogen biosynthesis. In terms of biological role, catalyzes the formation of the alpha-1,6-glucosidic linkages in glycogen by scission of a 1,4-alpha-linked oligosaccharide from growing alpha-1,4-glucan chains and the subsequent attachment of the oligosaccharide to the alpha-1,6 position. The protein is 1,4-alpha-glucan branching enzyme GlgB of Nitrosomonas europaea (strain ATCC 19718 / CIP 103999 / KCTC 2705 / NBRC 14298).